We begin with the raw amino-acid sequence, 185 residues long: Orotate phosphoribosyltransferase (185 aa).

Residues arginine 102, lysine 103, lysine 106, histidine 108, and 128 to 136 contribute to the 5-phospho-alpha-D-ribose 1-diphosphate site; that span reads DDVITTGGS. 2 residues coordinate orotate: threonine 132 and arginine 160.

The protein belongs to the purine/pyrimidine phosphoribosyltransferase family. PyrE subfamily. Homodimer. It depends on Mg(2+) as a cofactor.

The enzyme catalyses orotidine 5'-phosphate + diphosphate = orotate + 5-phospho-alpha-D-ribose 1-diphosphate. It participates in pyrimidine metabolism; UMP biosynthesis via de novo pathway; UMP from orotate: step 1/2. Functionally, catalyzes the transfer of a ribosyl phosphate group from 5-phosphoribose 1-diphosphate to orotate, leading to the formation of orotidine monophosphate (OMP). This chain is Orotate phosphoribosyltransferase, found in Leptospira biflexa serovar Patoc (strain Patoc 1 / Ames).